We begin with the raw amino-acid sequence, 631 residues long: Golgin subfamily A member 8R (631 aa).

Positions 1–72 are disordered; the sequence is MAEETQHNKL…REGPTSSATL (72 aa). Over residues 38–50 the composition is skewed to polar residues; that stretch reads TNGSIPETATSGG. Coiled coils occupy residues 85-149, 209-247, and 303-419; these read VLDS…NTDL, ELEQSLQDQALLKAQLTQLKESFQQLQLERDECAEHIEG, and SEVE…LSLM. 3 disordered regions span residues 422–451, 502–523, and 551–610; these read PGEGHGGEHLDSEGEEAPQPMPSVPEDPES, AKDAALGGGHHQAGAQGGDEGE, and NSAD…QEHP. The span at 507–519 shows a compositional bias: gly residues; the sequence is LGGGHHQAGAQGG. Residues 568–577 are compositionally biased toward basic and acidic residues; that stretch reads AADKHGDLRE.

The protein belongs to the GOLGA8 family.

This is Golgin subfamily A member 8R from Homo sapiens (Human).